A 119-amino-acid chain; its full sequence is uncharacterized protein (119 aa).

The protein to T.pallidum TP_0127, TP_0315 and TP_0619.

This is an uncharacterized protein from Treponema pallidum (strain Nichols).